We begin with the raw amino-acid sequence, 277 residues long: Hydroxypyruvate/pyruvate aldolase (277 aa).

Histidine 54 acts as the Proton acceptor in catalysis. Residues glutamate 158 and aspartate 184 each coordinate a divalent metal cation.

It belongs to the HpcH/HpaI aldolase family. The cofactor is a divalent metal cation.

The catalysed reaction is D-glyceraldehyde + 3-hydroxypyruvate = (3R,4S,5R)-3,4,5,6-tetrahydroxy-2-oxohexanoate. The enzyme catalyses D-glyceraldehyde + 3-hydroxypyruvate = 2-dehydro-D-gluconate. It carries out the reaction D-glyceraldehyde + 3-hydroxypyruvate = 2-dehydro-D-galactonate. It catalyses the reaction D-glyceraldehyde + pyruvate = 2-dehydro-3-deoxy-L-galactonate. Its function is as follows. Aldolase which can catalyze in vitro the aldolisation reaction between hydroxypyruvate (HPA) or pyruvate (PA) and D-glyceraldehyde (D-GA). The condensation of hydroxypyruvate and D-glyceraldehyde produces (3R,4S,5R)-3,4,5,6-tetrahydroxy-2-oxohexanoate as the major product, 2-dehydro-D-gluconate and 2-dehydro-D-galactonate. The condensation of pyruvate and D-glyceraldehyde produces 2-dehydro-3-deoxy-L-galactonate as the major product. This is Hydroxypyruvate/pyruvate aldolase from Deinococcus radiodurans (strain ATCC 13939 / DSM 20539 / JCM 16871 / CCUG 27074 / LMG 4051 / NBRC 15346 / NCIMB 9279 / VKM B-1422 / R1).